Here is an 88-residue protein sequence, read N- to C-terminus: Low calcium response locus protein S (88 aa).

The protein belongs to the transposase 8 family.

The chain is Low calcium response locus protein S (lcrS) from Yersinia pestis.